The chain runs to 396 residues: Elongation factor Tu (396 aa).

Positions 10–205 constitute a tr-type G domain; the sequence is KPHVNIGTIG…ACDDSIPDPE (196 aa). The segment at 19–26 is G1; sequence GHVDHGKT. Residue 19 to 26 coordinates GTP; the sequence is GHVDHGKT. Threonine 26 serves as a coordination point for Mg(2+). The tract at residues 62 to 66 is G2; the sequence is GITIN. The segment at 83 to 86 is G3; it reads DAPG. Residues 83 to 87 and 138 to 141 each bind GTP; these read DAPGH and NKCD. Positions 138 to 141 are G4; it reads NKCD. Residues 175 to 177 are G5; the sequence is SAL.

Belongs to the TRAFAC class translation factor GTPase superfamily. Classic translation factor GTPase family. EF-Tu/EF-1A subfamily. Monomer.

The protein localises to the cytoplasm. The enzyme catalyses GTP + H2O = GDP + phosphate + H(+). Its function is as follows. GTP hydrolase that promotes the GTP-dependent binding of aminoacyl-tRNA to the A-site of ribosomes during protein biosynthesis. This Corynebacterium diphtheriae (strain ATCC 700971 / NCTC 13129 / Biotype gravis) protein is Elongation factor Tu.